A 219-amino-acid polypeptide reads, in one-letter code: MPRITKAEMSRLLPVYFIMGSNNCTKEPLQVLRDALEGGITIFQLREKGEGALTGEKRIDFAKELQALCKEYGVPFIVNDDVELALELDADGVHVGQDDEGITSVREKMGDKIIGVSAHTIEEARFAIENGADYLGVGPIFPTSTKKDTKAVQGTKGLAHFREQGITMPIVGIGGITIENTAAVIEAGADGVSVISAISLAESAYESTRKLAEEVNKSL.

4-amino-2-methyl-5-(diphosphooxymethyl)pyrimidine contacts are provided by residues 44–48 (QLREK) and asparagine 79. Mg(2+) is bound by residues aspartate 80 and aspartate 99. Serine 117 is a binding site for 4-amino-2-methyl-5-(diphosphooxymethyl)pyrimidine. 143–145 (TST) lines the 2-[(2R,5Z)-2-carboxy-4-methylthiazol-5(2H)-ylidene]ethyl phosphate pocket. Lysine 146 contributes to the 4-amino-2-methyl-5-(diphosphooxymethyl)pyrimidine binding site. 2-[(2R,5Z)-2-carboxy-4-methylthiazol-5(2H)-ylidene]ethyl phosphate-binding positions include glycine 175 and 195 to 196 (IS).

Belongs to the thiamine-phosphate synthase family. Requires Mg(2+) as cofactor.

It catalyses the reaction 2-[(2R,5Z)-2-carboxy-4-methylthiazol-5(2H)-ylidene]ethyl phosphate + 4-amino-2-methyl-5-(diphosphooxymethyl)pyrimidine + 2 H(+) = thiamine phosphate + CO2 + diphosphate. The catalysed reaction is 2-(2-carboxy-4-methylthiazol-5-yl)ethyl phosphate + 4-amino-2-methyl-5-(diphosphooxymethyl)pyrimidine + 2 H(+) = thiamine phosphate + CO2 + diphosphate. The enzyme catalyses 4-methyl-5-(2-phosphooxyethyl)-thiazole + 4-amino-2-methyl-5-(diphosphooxymethyl)pyrimidine + H(+) = thiamine phosphate + diphosphate. It functions in the pathway cofactor biosynthesis; thiamine diphosphate biosynthesis; thiamine phosphate from 4-amino-2-methyl-5-diphosphomethylpyrimidine and 4-methyl-5-(2-phosphoethyl)-thiazole: step 1/1. Functionally, condenses 4-methyl-5-(beta-hydroxyethyl)thiazole monophosphate (THZ-P) and 2-methyl-4-amino-5-hydroxymethyl pyrimidine pyrophosphate (HMP-PP) to form thiamine monophosphate (TMP). The polypeptide is Thiamine-phosphate synthase (Bacillus mycoides (strain KBAB4) (Bacillus weihenstephanensis)).